Consider the following 166-residue polypeptide: uncharacterized protein (166 aa).

N-acetylalanine is present on A2.

As to quaternary structure, homodimer.

This is an uncharacterized protein from Arabidopsis thaliana (Mouse-ear cress).